We begin with the raw amino-acid sequence, 1083 residues long: Alpha-mannosidase (1083 aa).

Serine 2 bears the N-acetylserine mark. Residues histidine 298, aspartate 300, aspartate 411, and histidine 626 each contribute to the Zn(2+) site. Aspartate 411 (nucleophile) is an active-site residue.

This sequence belongs to the glycosyl hydrolase 38 family. Composed of isoforms with three constituent polypeptides described as [(107 kDa)-n (73 kDa)-(6-n) (31 kDa)-(6-n)], where n is 0-6. The 73 kDa and the 31 kDa polypeptides may be proteolytic derivatives of the 107 kDa polypeptide in the vacuole. Oligomerizes in the cytoplasm and retains its oligomeric form during import into the vacuole. It depends on Zn(2+) as a cofactor. The N-terminus is blocked.

It is found in the vacuole. It carries out the reaction Hydrolysis of terminal, non-reducing alpha-D-mannose residues in alpha-D-mannosides.. Degrades free oligosaccharides in the vacuole. The sequence is that of Alpha-mannosidase (AMS1) from Saccharomyces cerevisiae (strain ATCC 204508 / S288c) (Baker's yeast).